Consider the following 322-residue polypeptide: Ribosomal RNA small subunit methyltransferase H (322 aa).

S-adenosyl-L-methionine is bound by residues 40–42 (GGH), aspartate 60, phenylalanine 84, aspartate 106, and glutamine 113.

This sequence belongs to the methyltransferase superfamily. RsmH family.

The protein resides in the cytoplasm. The enzyme catalyses cytidine(1402) in 16S rRNA + S-adenosyl-L-methionine = N(4)-methylcytidine(1402) in 16S rRNA + S-adenosyl-L-homocysteine + H(+). Specifically methylates the N4 position of cytidine in position 1402 (C1402) of 16S rRNA. In Aggregatibacter aphrophilus (strain NJ8700) (Haemophilus aphrophilus), this protein is Ribosomal RNA small subunit methyltransferase H.